The chain runs to 445 residues: DNA primase DnaG (445 aa).

Residues 166-252 (DAIVVVEGRS…SVEDLSRSEV (87 aa)) form the Toprim domain. Positions 172, 214, and 216 each coordinate Mg(2+). The interval 276-355 (EEMSQAGEST…NGDGPTIPSL (80 aa)) is disordered. The segment covering 284–298 (STTADGGAVAAATSD) has biased composition (low complexity). Residues 303–313 (NQPSPSSQTGS) show a composition bias toward polar residues. Over residues 324-337 (SVVDNSNATAVADA) the composition is skewed to low complexity.

The protein belongs to the archaeal DnaG primase family. In terms of assembly, forms a ternary complex with MCM helicase and DNA. Requires Mg(2+) as cofactor.

It catalyses the reaction ssDNA + n NTP = ssDNA/pppN(pN)n-1 hybrid + (n-1) diphosphate.. Its function is as follows. RNA polymerase that catalyzes the synthesis of short RNA molecules used as primers for DNA polymerase during DNA replication. In Haloarcula marismortui (strain ATCC 43049 / DSM 3752 / JCM 8966 / VKM B-1809) (Halobacterium marismortui), this protein is DNA primase DnaG.